Reading from the N-terminus, the 449-residue chain is Wilms tumor protein homolog (449 aa).

The disordered stretch occupies residues 48–84 (YGSLGGPAPPPAPPPPPPPPPHSFIKQEPSWGGAEPH). Over residues 54 to 69 (PAPPPAPPPPPPPPPH) the composition is skewed to pro residues. Glycyl lysine isopeptide (Lys-Gly) (interchain with G-Cter in SUMO) cross-links involve residues Lys73 and Lys177. A 9aaTAD motif is present at residues 236 to 244 (MTWNQMNLG). 3 consecutive C2H2-type zinc fingers follow at residues 323-347 (FMCA…SRKH), 353-377 (YQCD…QRRH), and 383-405 (FQCK…TRTH). Important for interaction with target DNA regions lie at residues 367-381 (SDQL…TGVK) and 393-401 (SRSDHLKTH). The KTS motif motif lies at 408–410 (KTS). The C2H2-type 4 zinc-finger motif lies at 414 to 438 (FSCRWPSCQKKFARSDELVRHHNMH). Lys444 is covalently cross-linked (Glycyl lysine isopeptide (Lys-Gly) (interchain with G-Cter in SUMO2)).

The protein belongs to the EGR C2H2-type zinc-finger protein family. As to quaternary structure, interacts with ZNF224 via the zinc-finger region. Interacts with WTAP, AMER1 and SRY. Homodimer. Interacts with WTIP. Interacts with actively translating polysomes. Detected in nuclear ribonucleoprotein (mRNP) particles. Interacts with U2AF2. Interacts with HNRNPU via the zinc-finger region. Interacts with CITED2. Interacts with RBM4.

It is found in the nucleus speckle. It localises to the nucleus. The protein localises to the nucleoplasm. The protein resides in the nucleolus. Its subcellular location is the cytoplasm. Its function is as follows. Transcription factor that plays an important role in cellular development and cell survival. Recognizes and binds to the DNA sequence 5'-GCG(T/G)GGGCG-3'. Regulates the expression of numerous target genes, including EPO. Plays an essential role for development of the urogenital system. It has a tumor suppressor as well as an oncogenic role in tumor formation. Function may be isoform-specific: isoforms lacking the KTS motif may act as transcription factors. Isoforms containing the KTS motif may bind mRNA and play a role in mRNA metabolism or splicing. Isoform 1 has lower affinity for DNA, and can bind RNA. This chain is Wilms tumor protein homolog (WT1), found in Sus scrofa (Pig).